Here is a 357-residue protein sequence, read N- to C-terminus: sn-glycerol-3-phosphate import ATP-binding protein UgpC (357 aa).

The ABC transporter domain occupies 4-235 (LKLQAVTKSY…PASLFVASFI (232 aa)). 37 to 44 (GPSGCGKS) contacts ATP.

Belongs to the ABC transporter superfamily. sn-glycerol-3-phosphate importer (TC 3.A.1.1.3) family. The complex is composed of two ATP-binding proteins (UgpC), two transmembrane proteins (UgpA and UgpE) and a solute-binding protein (UgpB).

The protein localises to the cell inner membrane. The enzyme catalyses sn-glycerol 3-phosphate(out) + ATP + H2O = sn-glycerol 3-phosphate(in) + ADP + phosphate + H(+). Part of the ABC transporter complex UgpBAEC involved in sn-glycerol-3-phosphate (G3P) import. Responsible for energy coupling to the transport system. The polypeptide is sn-glycerol-3-phosphate import ATP-binding protein UgpC (Pectobacterium atrosepticum (strain SCRI 1043 / ATCC BAA-672) (Erwinia carotovora subsp. atroseptica)).